We begin with the raw amino-acid sequence, 87 residues long: uncharacterized protein (87 aa).

A run of 2 helical transmembrane segments spans residues 7-27 and 64-84; these read LFFI…LYSI and GINI…IPLF.

It is found in the membrane. This is an uncharacterized protein from Schizosaccharomyces pombe (strain 972 / ATCC 24843) (Fission yeast).